The primary structure comprises 169 residues: Peptide deformylase (169 aa).

Fe cation-binding residues include cysteine 91 and histidine 133. Glutamate 134 is an active-site residue. Histidine 137 lines the Fe cation pocket.

Belongs to the polypeptide deformylase family. The cofactor is Fe(2+).

It carries out the reaction N-terminal N-formyl-L-methionyl-[peptide] + H2O = N-terminal L-methionyl-[peptide] + formate. In terms of biological role, removes the formyl group from the N-terminal Met of newly synthesized proteins. Requires at least a dipeptide for an efficient rate of reaction. N-terminal L-methionine is a prerequisite for activity but the enzyme has broad specificity at other positions. This chain is Peptide deformylase, found in Enterobacter sp. (strain 638).